The chain runs to 310 residues: MSENRIRIATRKSPLAMWQAEFVKAELERIHPGIVVELLPMSTKGDVILDTPLAKVGGKGLFVKELEVAMLDDLADIAVHSMKDVPVDFPEGLGLEVICEREDPRDAFVSNLYKSISELPLGATVGTSSLRRQCQIRASRPDLIIKDLRGNVGTRLAKLDNGEYDAIILAAAGLIRLKLSERIASFISAEESLPANGQGAVGIECRINDERVKALLAPLEHLETRYRVLAERAMNTRLEGGCQVPIGAFAEIDGDEMTLRGLVGNPDGSEIIEGVITGPKTEATQLGVALAEELLSKGAKTILDAVYAKA.

S-(dipyrrolylmethanemethyl)cysteine is present on Cys242.

It belongs to the HMBS family. In terms of assembly, monomer. The cofactor is dipyrromethane.

The catalysed reaction is 4 porphobilinogen + H2O = hydroxymethylbilane + 4 NH4(+). Its pathway is porphyrin-containing compound metabolism; protoporphyrin-IX biosynthesis; coproporphyrinogen-III from 5-aminolevulinate: step 2/4. In terms of biological role, tetrapolymerization of the monopyrrole PBG into the hydroxymethylbilane pre-uroporphyrinogen in several discrete steps. The chain is Porphobilinogen deaminase from Shewanella baltica (strain OS155 / ATCC BAA-1091).